Here is a 1499-residue protein sequence, read N- to C-terminus: ABC multidrug transporter A-2 (1499 aa).

Disordered stretches follow at residues Met-1 to Glu-66 and Gln-80 to Lys-107. Polar residues predominate over residues Ile-16 to Arg-30. Residues Gln-31–Ser-51 show a composition bias toward basic and acidic residues. Residues Gln-80–Asp-94 show a composition bias toward polar residues. An ABC transporter 1 domain is found at Leu-166–Asp-415. Asn-339 carries N-linked (GlcNAc...) asparagine glycosylation. The next 5 membrane-spanning stretches (helical) occupy residues Met-526–Tyr-546, Leu-561–Trp-581, Met-606–Phe-626, Gly-635–Phe-655, and Met-669–Val-689. Residue Asn-763 is glycosylated (N-linked (GlcNAc...) asparagine). The helical transmembrane segment at Gly-778–Val-798 threads the bilayer. Residues Phe-857–Ser-1100 form the ABC transporter 2 domain. Gly-893 to Thr-900 is a binding site for ATP. Helical transmembrane passes span Tyr-1193 to Trp-1213, Phe-1227 to Phe-1247, Ala-1268 to Ala-1288, Leu-1317 to Ile-1337, and Leu-1353 to Phe-1373. Residue Asn-1414 is glycosylated (N-linked (GlcNAc...) asparagine). The helical transmembrane segment at Gly-1466–Ile-1486 threads the bilayer.

The protein belongs to the ABC transporter superfamily. ABCG family. PDR (TC 3.A.1.205) subfamily.

It is found in the cell membrane. It carries out the reaction itraconazole(in) + ATP + H2O = itraconazole(out) + ADP + phosphate + H(+). The catalysed reaction is voriconazole(in) + ATP + H2O = voriconazole(out) + ADP + phosphate + H(+). With respect to regulation, the efflux inhibitor FK506 impairs the transport activity. In terms of biological role, pleiotropic ABC efflux transporter that confers resistance to structurally and functionally unrelated compounds including azoles such as itraconazole, posaconazole, and voriconazole. The chain is ABC multidrug transporter A-2 from Aspergillus fumigatus (strain ATCC MYA-4609 / CBS 101355 / FGSC A1100 / Af293) (Neosartorya fumigata).